Consider the following 643-residue polypeptide: Fructose-1,6-bisphosphatase class 3 (643 aa).

Belongs to the FBPase class 3 family. The cofactor is Mn(2+).

The catalysed reaction is beta-D-fructose 1,6-bisphosphate + H2O = beta-D-fructose 6-phosphate + phosphate. It functions in the pathway carbohydrate biosynthesis; gluconeogenesis. The chain is Fructose-1,6-bisphosphatase class 3 from Streptococcus agalactiae serotype Ia (strain ATCC 27591 / A909 / CDC SS700).